The primary structure comprises 101 residues: Osteocalcin (101 aa).

The first 19 residues, 1–19, serve as a signal peptide directing secretion; that stretch reads MKLAILTVLLLGAAVLCLG. Residues 20–52 constitute a propeptide that is removed on maturation; that stretch reads SKDADHSNSVGESHSSEAFISRQESASFARLKR. One can recognise a Gla domain in the interval 53–99; the sequence is SYGNNVGQGAAVGSPLESQREVCELNPDCDELADHIGFQEAYRRFYG. The Ca(2+) site is built by glutamate 69, glutamate 73, glutamate 76, and aspartate 82. 3 positions are modified to 4-carboxyglutamate: glutamate 69, glutamate 73, and glutamate 76. Cysteine 75 and cysteine 81 form a disulfide bridge.

This sequence belongs to the osteocalcin/matrix Gla protein family. Post-translationally, gamma-carboxyglutamate residues are formed by vitamin K dependent carboxylation by GGCX. These residues are essential for the binding of calcium.

The protein localises to the secreted. Its function is as follows. The carboxylated form is one of the main organic components of the bone matrix, which constitutes 1-2% of the total bone protein. The carboxylated form binds strongly to apatite and calcium. The protein is Osteocalcin (bglap) of Xenopus laevis (African clawed frog).